Reading from the N-terminus, the 472-residue chain is Glutamate synthase [NADPH] small chain (472 aa).

The 4Fe-4S ferredoxin-type domain maps to 41–72; sequence QDAAAQAHRCLHCGNPYCEWKCPVHNYIPNWL. Residues cysteine 50, cysteine 53, cysteine 58, and cysteine 62 each contribute to the [4Fe-4S] cluster site.

The cofactor is [4Fe-4S] cluster.

It carries out the reaction 2 L-glutamate + NADP(+) = L-glutamine + 2-oxoglutarate + NADPH + H(+). It functions in the pathway amino-acid biosynthesis; L-glutamate biosynthesis via GLT pathway; L-glutamate from 2-oxoglutarate and L-glutamine (NADP(+) route): step 1/1. Its pathway is energy metabolism; nitrogen metabolism. Functionally, catalyzes the conversion of L-glutamine and 2-oxoglutarate into two molecules of L-glutamate. This Halomonas elongata (strain ATCC 33173 / DSM 2581 / NBRC 15536 / NCIMB 2198 / 1H9) protein is Glutamate synthase [NADPH] small chain.